The chain runs to 356 residues: Arginine kinase (356 aa).

A2 carries the post-translational modification N-acetylalanine. Residues 9 to 91 (KLEAGFKKLE…FDPIIEDYHV (83 aa)) form the Phosphagen kinase N-terminal domain. Residue 64 to 68 (GVGIY) participates in L-arginine binding. In terms of domain architecture, Phosphagen kinase C-terminal spans 119–356 (YVISTRVRCG…LELIKMEKEM (238 aa)). ATP is bound by residues 122 to 126 (STRVR) and H185. E225 contributes to the L-arginine binding site. R229 contributes to the ATP binding site. An L-arginine-binding site is contributed by C271. ATP is bound by residues 280 to 284 (RASVH) and 309 to 314 (RGTRGE). Residue E314 participates in L-arginine binding.

The protein belongs to the ATP:guanido phosphotransferase family.

The catalysed reaction is L-arginine + ATP = N(omega)-phospho-L-arginine + ADP + H(+). This chain is Arginine kinase, found in Penaeus monodon (Giant tiger prawn).